The sequence spans 475 residues: MTDSVVTRFAPSPTGFLHIGGARTALFNWLYAKKHGGKMLLRIEDTDRERSTEAAIGAILDGLKWLELGWDGDVIYQFSRAARHREVAEQLLADGKAYRCYATAEELTAMREKARAEGRTRLYDGMWRDRDPATAPSDVKPTIRLRAPQTGETVIEDQVQGRVVWQNENLDDLVLLRGDGNPTYMLAVVVDDHDMGVTHVIRGDDHLINAARQKQIHDAMGWALPSMSHIPLIHGPDGSKLSKRHGALGVDAYRAMGYLPAALRNYLVRLGWSHGDQEIFSTEEMIAAFDLSSVGRAAARFDFAKLENLNGHYIRHADDQSLVKMFEDVLDHVVPSRDELKAKLNDTTRAQLLKAMPALKERAKTLIELIDSAYFIFADRPLELDPKAQALLTPDNRKLIGQLHSALENVETWSGATTEAALRAFAEENSLKLGAVAQPLRAALTGRTTSPGIFEVLDVLGRQESLGRLKDQAKD.

A 'HIGH' region motif is present at residues 11 to 21 (PSPTGFLHIGG). The 'KMSKS' region signature appears at 240–244 (KLSKR). Lys243 contributes to the ATP binding site.

It belongs to the class-I aminoacyl-tRNA synthetase family. Glutamate--tRNA ligase type 1 subfamily. Monomer.

Its subcellular location is the cytoplasm. It carries out the reaction tRNA(Glu) + L-glutamate + ATP = L-glutamyl-tRNA(Glu) + AMP + diphosphate. In terms of biological role, catalyzes the attachment of glutamate to tRNA(Glu) in a two-step reaction: glutamate is first activated by ATP to form Glu-AMP and then transferred to the acceptor end of tRNA(Glu). The chain is Glutamate--tRNA ligase from Bradyrhizobium diazoefficiens (strain JCM 10833 / BCRC 13528 / IAM 13628 / NBRC 14792 / USDA 110).